The chain runs to 525 residues: GMP synthase [glutamine-hydrolyzing] (525 aa).

One can recognise a Glutamine amidotransferase type-1 domain in the interval threonine 13–threonine 202. The active-site Nucleophile is cysteine 89. Active-site residues include histidine 176 and glutamate 178. Residues tryptophan 203–arginine 400 enclose the GMPS ATP-PPase domain. Position 231-237 (serine 231–threonine 237) interacts with ATP. XMP contacts are provided by arginine 304, aspartate 462, lysine 517, and glutamate 523.

As to quaternary structure, homodimer. Mg(2+) serves as cofactor.

It is found in the cytoplasm. It localises to the cytosol. It catalyses the reaction XMP + L-glutamine + ATP + H2O = GMP + L-glutamate + AMP + diphosphate + 2 H(+). The protein operates within purine metabolism; GMP biosynthesis; GMP from XMP (L-Gln route): step 1/1. In terms of biological role, catalyzes the conversion of xanthine monophosphate (XMP) to GMP in the presence of glutamine and ATP through an adenyl-XMP intermediate. The polypeptide is GMP synthase [glutamine-hydrolyzing] (GUA1) (Eremothecium gossypii (strain ATCC 10895 / CBS 109.51 / FGSC 9923 / NRRL Y-1056) (Yeast)).